The following is a 192-amino-acid chain: Large ribosomal subunit protein bL9 (192 aa).

Residues 173–192 (ALRPEDFFDPEADGLDENEA) are disordered. The segment covering 179 to 192 (FFDPEADGLDENEA) has biased composition (acidic residues).

This sequence belongs to the bacterial ribosomal protein bL9 family.

Functionally, binds to the 23S rRNA. The polypeptide is Large ribosomal subunit protein bL9 (Rhizobium etli (strain ATCC 51251 / DSM 11541 / JCM 21823 / NBRC 15573 / CFN 42)).